Reading from the N-terminus, the 348-residue chain is Dihydroorotase (348 aa).

Residues His17 and His19 each coordinate Zn(2+). Substrate-binding positions include 19-21 (HLR) and Asn45. The Zn(2+) site is built by Lys103, His140, and His178. At Lys103 the chain carries N6-carboxylysine. His140 contacts substrate. Position 223 (Leu223) interacts with substrate. Residue Asp251 coordinates Zn(2+). Asp251 is an active-site residue. The substrate site is built by His255 and Ala267.

It belongs to the metallo-dependent hydrolases superfamily. DHOase family. Class II DHOase subfamily. Homodimer. Zn(2+) is required as a cofactor.

It catalyses the reaction (S)-dihydroorotate + H2O = N-carbamoyl-L-aspartate + H(+). It functions in the pathway pyrimidine metabolism; UMP biosynthesis via de novo pathway; (S)-dihydroorotate from bicarbonate: step 3/3. Its function is as follows. Catalyzes the reversible cyclization of carbamoyl aspartate to dihydroorotate. The chain is Dihydroorotase from Salmonella newport (strain SL254).